The following is a 248-amino-acid chain: MRKPIIAGNWKMNKVSKEALDLVNQIKDEVHKTEVEVVVCCPFTVLSQVQKALVGTNLKLGAQNMHWEEDGAYTGEISANMLKDIGVEYVILGHSERRQYFNETDETVNKKVKKAIKENLKPIVCIGESLEEREANQTFDVIKKQLLGAFEGVPAEAMDNVVLAYEPIWAIGTGKTASSEEAQTVIAYIRSLIEEKYGVDISEEVRIQYGGSVKASNATEIMNETDIDGALVGGASLKAEEFLGIINF.

9–11 contributes to the substrate binding site; it reads NWK. Histidine 94 functions as the Electrophile in the catalytic mechanism. Glutamate 166 acts as the Proton acceptor in catalysis. Substrate-binding positions include glycine 172, serine 212, and 233-234; that span reads GG.

This sequence belongs to the triosephosphate isomerase family. Homodimer.

The protein resides in the cytoplasm. The catalysed reaction is D-glyceraldehyde 3-phosphate = dihydroxyacetone phosphate. It functions in the pathway carbohydrate biosynthesis; gluconeogenesis. Its pathway is carbohydrate degradation; glycolysis; D-glyceraldehyde 3-phosphate from glycerone phosphate: step 1/1. In terms of biological role, involved in the gluconeogenesis. Catalyzes stereospecifically the conversion of dihydroxyacetone phosphate (DHAP) to D-glyceraldehyde-3-phosphate (G3P). The polypeptide is Triosephosphate isomerase (Alkaliphilus oremlandii (strain OhILAs) (Clostridium oremlandii (strain OhILAs))).